The primary structure comprises 302 residues: Acetaldehyde dehydrogenase (302 aa).

12-15 provides a ligand contact to NAD(+); sequence SGNI. Cysteine 127 (acyl-thioester intermediate) is an active-site residue. NAD(+) contacts are provided by residues 158-166 and asparagine 276; that span reads SAGPGTRQN.

Belongs to the acetaldehyde dehydrogenase family.

The enzyme catalyses acetaldehyde + NAD(+) + CoA = acetyl-CoA + NADH + H(+). The sequence is that of Acetaldehyde dehydrogenase (nahO) from Geobacillus genomosp. 3.